The primary structure comprises 465 residues: Asparagine--tRNA ligase (465 aa).

Belongs to the class-II aminoacyl-tRNA synthetase family. In terms of assembly, homodimer.

It localises to the cytoplasm. The enzyme catalyses tRNA(Asn) + L-asparagine + ATP = L-asparaginyl-tRNA(Asn) + AMP + diphosphate + H(+). The protein is Asparagine--tRNA ligase of Pseudoalteromonas atlantica (strain T6c / ATCC BAA-1087).